The primary structure comprises 483 residues: Glutamyl-tRNA(Gln) amidotransferase subunit A (483 aa).

Residues lysine 75 and serine 150 each act as charge relay system in the active site. Serine 174 (acyl-ester intermediate) is an active-site residue.

Belongs to the amidase family. GatA subfamily. As to quaternary structure, heterotrimer of A, B and C subunits.

It carries out the reaction L-glutamyl-tRNA(Gln) + L-glutamine + ATP + H2O = L-glutaminyl-tRNA(Gln) + L-glutamate + ADP + phosphate + H(+). In terms of biological role, allows the formation of correctly charged Gln-tRNA(Gln) through the transamidation of misacylated Glu-tRNA(Gln) in organisms which lack glutaminyl-tRNA synthetase. The reaction takes place in the presence of glutamine and ATP through an activated gamma-phospho-Glu-tRNA(Gln). This Gloeothece citriformis (strain PCC 7424) (Cyanothece sp. (strain PCC 7424)) protein is Glutamyl-tRNA(Gln) amidotransferase subunit A.